The primary structure comprises 375 residues: MVKKPRMATPAASKGVKLDPGMKTILEKEPGLKTTLQQIEKSFGDGAIMPLGASQKLTIDCISTGSLSLDMALGGKGIPRGRIIEVFGPESSGKTTLALHIGAEAQKSGGIAAIIDAEHAFDPSWAKKLGVELDSLLVSQPSSGEEAMQICEMLVKSNAVDVIIIDSVAALVPKAELEGEIGDSHVGLQARLMSQSMRKLTGAIAKSKSAVVFINQIREKVGVMFGSPETTPGGRALKFYCSCRIDVRRIGSLKDGEEQVGQRVKAKIVKNKVAPPFRIAEFDMMHSNGISFEGDLLDLGTENKVVNRSGSWFKYGDTYLGQGKEKARNFLIENPDVSDEIKQKVLAAGGFVAPLEVDADESEEAVEDGEAVANS.

88 to 95 (GPESSGKT) provides a ligand contact to ATP.

This sequence belongs to the RecA family.

It is found in the cytoplasm. Can catalyze the hydrolysis of ATP in the presence of single-stranded DNA, the ATP-dependent uptake of single-stranded DNA by duplex DNA, and the ATP-dependent hybridization of homologous single-stranded DNAs. It interacts with LexA causing its activation and leading to its autocatalytic cleavage. The sequence is that of Protein RecA from Rhodopirellula baltica (strain DSM 10527 / NCIMB 13988 / SH1).